The following is a 114-amino-acid chain: Hemerythrin (114 aa).

The Fe cation site is built by histidine 26, histidine 55, glutamate 59, histidine 74, histidine 78, histidine 102, and aspartate 107.

Belongs to the hemerythrin family. As to quaternary structure, homooctamer.

Hemerythrin is a respiratory protein in blood cells of certain marine worms. The oxygen-binding site in each chain contains two iron atoms. The chain is Hemerythrin from Phascolopsis gouldii (Peanut worm).